The chain runs to 266 residues: Flavin-dependent thymidylate synthase (266 aa).

Residues 11–222 (GFIRLVDYMG…PLACASFERH (212 aa)) form the ThyX domain. Residues Ser57, 80–82 (RHR), and Glu88 each bind FAD. Residues 77–80 (QWIR), 88–92 (EISGR), and Arg161 contribute to the dUMP site. The short motif at 80 to 90 (RHRTARLNEIS) is the ThyX motif element. FAD-binding positions include 177–179 (DLH) and His183. Arg188 contributes to the dUMP binding site. Arg188 functions as the Involved in ionization of N3 of dUMP, leading to its activation in the catalytic mechanism.

The protein belongs to the thymidylate synthase ThyX family. In terms of assembly, homotetramer. Requires FAD as cofactor.

The catalysed reaction is dUMP + (6R)-5,10-methylene-5,6,7,8-tetrahydrofolate + NADPH + H(+) = dTMP + (6S)-5,6,7,8-tetrahydrofolate + NADP(+). The protein operates within pyrimidine metabolism; dTTP biosynthesis. Its function is as follows. Catalyzes the reductive methylation of 2'-deoxyuridine-5'-monophosphate (dUMP) to 2'-deoxythymidine-5'-monophosphate (dTMP) while utilizing 5,10-methylenetetrahydrofolate (mTHF) as the methyl donor, and NADPH and FADH(2) as the reductant. The protein is Flavin-dependent thymidylate synthase of Treponema denticola (strain ATCC 35405 / DSM 14222 / CIP 103919 / JCM 8153 / KCTC 15104).